Here is a 615-residue protein sequence, read N- to C-terminus: Alpha-fetoprotein (615 aa).

The signal sequence occupies residues methionine 1 to glycine 15. The short motif at arginine 14–aspartate 16 is the Cell attachment site element. 3 Albumin domains span residues tryptophan 27 to alanine 218, lysine 223 to lysine 415, and histidine 416 to threonine 609. 2 cysteine pairs are disulfide-bonded: cysteine 109–cysteine 121 and cysteine 120–cysteine 131. Asparagine 137 and asparagine 157 each carry an N-linked (GlcNAc...) asparagine glycan. Cystine bridges form between cysteine 155-cysteine 200, cysteine 199-cysteine 213, cysteine 236-cysteine 282, cysteine 281-cysteine 289, cysteine 301-cysteine 315, cysteine 314-cysteine 325, cysteine 396-cysteine 405, cysteine 428-cysteine 458, and cysteine 457-cysteine 468. The Cell attachment site signature appears at arginine 283–aspartate 285. An N-linked (GlcNAc...) asparagine glycan is attached at asparagine 472. Intrachain disulfides connect cysteine 485-cysteine 501, cysteine 500-cysteine 511, cysteine 538-cysteine 593, and cysteine 592-cysteine 601.

Belongs to the ALB/AFP/VDB family. Dimeric and trimeric forms have been found in addition to the monomeric form. Sulfated.

It is found in the secreted. Its function is as follows. Binds copper, nickel, and fatty acids as well as, and bilirubin less well than, serum albumin. The protein is Alpha-fetoprotein (AFP) of Gallus gallus (Chicken).